The chain runs to 327 residues: Phenylalanine--tRNA ligase alpha subunit (327 aa).

Glu-252 is a binding site for Mg(2+).

This sequence belongs to the class-II aminoacyl-tRNA synthetase family. Phe-tRNA synthetase alpha subunit type 1 subfamily. As to quaternary structure, tetramer of two alpha and two beta subunits. Mg(2+) is required as a cofactor.

The protein localises to the cytoplasm. The catalysed reaction is tRNA(Phe) + L-phenylalanine + ATP = L-phenylalanyl-tRNA(Phe) + AMP + diphosphate + H(+). The protein is Phenylalanine--tRNA ligase alpha subunit of Shigella boydii serotype 18 (strain CDC 3083-94 / BS512).